Consider the following 384-residue polypeptide: F-box protein At2g07140 (384 aa).

The region spanning 1–46 is the F-box domain; sequence MTLPELPKDLVEEILSFVPATSLKRLRSTCKGWNRLFKDDKRFTRI.

This is F-box protein At2g07140 from Arabidopsis thaliana (Mouse-ear cress).